We begin with the raw amino-acid sequence, 564 residues long: Dihydroxy-acid dehydratase (564 aa).

Cys50 lines the [2Fe-2S] cluster pocket. Asp82 serves as a coordination point for Mg(2+). A [2Fe-2S] cluster-binding site is contributed by Cys123. Asp124 and Lys125 together coordinate Mg(2+). An N6-carboxylysine modification is found at Lys125. Cys195 serves as a coordination point for [2Fe-2S] cluster. Glu447 serves as a coordination point for Mg(2+). The active-site Proton acceptor is Ser473.

The protein belongs to the IlvD/Edd family. As to quaternary structure, homodimer. [2Fe-2S] cluster serves as cofactor. It depends on Mg(2+) as a cofactor.

It carries out the reaction (2R)-2,3-dihydroxy-3-methylbutanoate = 3-methyl-2-oxobutanoate + H2O. The catalysed reaction is (2R,3R)-2,3-dihydroxy-3-methylpentanoate = (S)-3-methyl-2-oxopentanoate + H2O. Its pathway is amino-acid biosynthesis; L-isoleucine biosynthesis; L-isoleucine from 2-oxobutanoate: step 3/4. The protein operates within amino-acid biosynthesis; L-valine biosynthesis; L-valine from pyruvate: step 3/4. In terms of biological role, functions in the biosynthesis of branched-chain amino acids. Catalyzes the dehydration of (2R,3R)-2,3-dihydroxy-3-methylpentanoate (2,3-dihydroxy-3-methylvalerate) into 2-oxo-3-methylpentanoate (2-oxo-3-methylvalerate) and of (2R)-2,3-dihydroxy-3-methylbutanoate (2,3-dihydroxyisovalerate) into 2-oxo-3-methylbutanoate (2-oxoisovalerate), the penultimate precursor to L-isoleucine and L-valine, respectively. The polypeptide is Dihydroxy-acid dehydratase (Chloroflexus aggregans (strain MD-66 / DSM 9485)).